A 211-amino-acid polypeptide reads, in one-letter code: Dephospho-CoA kinase (211 aa).

Residues 7–211 (LIGVIGRSGA…ILTRRGVLGE (205 aa)) form the DPCK domain. 15-20 (GAGKNV) lines the ATP pocket.

Belongs to the CoaE family.

It is found in the cytoplasm. The enzyme catalyses 3'-dephospho-CoA + ATP = ADP + CoA + H(+). It functions in the pathway cofactor biosynthesis; coenzyme A biosynthesis; CoA from (R)-pantothenate: step 5/5. In terms of biological role, catalyzes the phosphorylation of the 3'-hydroxyl group of dephosphocoenzyme A to form coenzyme A. This is Dephospho-CoA kinase from Treponema pallidum (strain Nichols).